A 226-amino-acid polypeptide reads, in one-letter code: Ribose-5-phosphate isomerase A (226 aa).

Residues 28 to 31 (TGST), 80 to 83 (DGAD), and 93 to 96 (KGGG) each bind substrate. Residue Glu-102 is the Proton acceptor of the active site. Residue Lys-120 coordinates substrate.

Belongs to the ribose 5-phosphate isomerase family. As to quaternary structure, homodimer.

It carries out the reaction aldehydo-D-ribose 5-phosphate = D-ribulose 5-phosphate. It participates in carbohydrate degradation; pentose phosphate pathway; D-ribose 5-phosphate from D-ribulose 5-phosphate (non-oxidative stage): step 1/1. Catalyzes the reversible conversion of ribose-5-phosphate to ribulose 5-phosphate. This chain is Ribose-5-phosphate isomerase A, found in Caulobacter sp. (strain K31).